The sequence spans 125 residues: Ribosome-binding factor A (125 aa).

It belongs to the RbfA family. Monomer. Binds 30S ribosomal subunits, but not 50S ribosomal subunits or 70S ribosomes.

It localises to the cytoplasm. Functionally, one of several proteins that assist in the late maturation steps of the functional core of the 30S ribosomal subunit. Associates with free 30S ribosomal subunits (but not with 30S subunits that are part of 70S ribosomes or polysomes). Required for efficient processing of 16S rRNA. May interact with the 5'-terminal helix region of 16S rRNA. In Desulfitobacterium hafniense (strain DSM 10664 / DCB-2), this protein is Ribosome-binding factor A.